A 223-amino-acid polypeptide reads, in one-letter code: Small ribosomal subunit protein uS3 (223 aa).

In terms of domain architecture, KH type-2 spans 38-106; it reads LKAELKEKLK…EVYIDIQEVH (69 aa).

Belongs to the universal ribosomal protein uS3 family. As to quaternary structure, part of the 30S ribosomal subunit. Forms a tight complex with proteins S10 and S14.

Functionally, binds the lower part of the 30S subunit head. Binds mRNA in the 70S ribosome, positioning it for translation. This is Small ribosomal subunit protein uS3 from Koribacter versatilis (strain Ellin345).